The chain runs to 254 residues: 3-deoxy-manno-octulosonate cytidylyltransferase (254 aa).

This sequence belongs to the KdsB family.

It localises to the cytoplasm. It carries out the reaction 3-deoxy-alpha-D-manno-oct-2-ulosonate + CTP = CMP-3-deoxy-beta-D-manno-octulosonate + diphosphate. It participates in nucleotide-sugar biosynthesis; CMP-3-deoxy-D-manno-octulosonate biosynthesis; CMP-3-deoxy-D-manno-octulosonate from 3-deoxy-D-manno-octulosonate and CTP: step 1/1. It functions in the pathway bacterial outer membrane biogenesis; lipopolysaccharide biosynthesis. Functionally, activates KDO (a required 8-carbon sugar) for incorporation into bacterial lipopolysaccharide in Gram-negative bacteria. This Tolumonas auensis (strain DSM 9187 / NBRC 110442 / TA 4) protein is 3-deoxy-manno-octulosonate cytidylyltransferase.